The following is a 605-amino-acid chain: Alpha-1,3-galactosidase A (605 aa).

A signal peptide spans 1–20; it reads MKKYLHILPACFLFYAAAHA. PbH1 repeat units follow at residues 256 to 278, 312 to 334, 421 to 443, 444 to 466, 477 to 507, and 517 to 547; these read SKNI…VSQY, KGKV…NVHG, TPEV…LVTT, PRKV…LIEA, VKDV…HPSN, and HQNI…LFRN.

This sequence belongs to the glycosyl hydrolase 110 family. A subfamily.

It catalyses the reaction Hydrolysis of terminal, non-reducing branched (1-&gt;3)-alpha-D-galactosidic residues, producing free D-galactose.. It carries out the reaction Hydrolysis of terminal, non-reducing alpha-D-galactose residues in alpha-D-galactosides, including galactose oligosaccharides, galactomannans and galactolipids.. Functionally, alpha-galactosidase that specifically removes branched alpha-1,3-linked galactose residues present in blood group B antigens. Has no activity toward linear alpha-1,3-linked galactose residues. The protein is Alpha-1,3-galactosidase A (glaA) of Bacteroides fragilis (strain YCH46).